Reading from the N-terminus, the 103-residue chain is MSRILKSLSRSYSTTSPRLYVDVVQGLYISSLKSYKPKAVPSETAAEVKEWSMPSAPTAPKYDVDFTSALNSYKYEGETIPTKAAGESNKFDFLESYENEKEH.

The N-terminal 26 residues, 1–26 (MSRILKSLSRSYSTTSPRLYVDVVQG), are a transit peptide targeting the mitochondrion.

It belongs to the ATPase h subunit family. F-type ATPases have 2 components, CF(1) - the catalytic core - and CF(0) - the membrane proton channel.

It localises to the mitochondrion. It is found in the mitochondrion inner membrane. Mitochondrial membrane ATP synthase (F(1)F(0) ATP synthase or Complex V) produces ATP from ADP in the presence of a proton gradient across the membrane which is generated by electron transport complexes of the respiratory chain. F-type ATPases consist of two structural domains, F(1) - containing the extramembraneous catalytic core and F(0) - containing the membrane proton channel, linked together by a central stalk and a peripheral stalk. During catalysis, ATP synthesis in the catalytic domain of F(1) is coupled via a rotary mechanism of the central stalk subunits to proton translocation. Part of the complex F(0) domain. Minor subunit located with subunit a in the membrane. The polypeptide is ATP synthase subunit H, mitochondrial (atp14) (Schizosaccharomyces pombe (strain 972 / ATCC 24843) (Fission yeast)).